The sequence spans 1676 residues: Protein TIC 214 (1676 aa).

Transmembrane regions (helical) follow at residues 24–44 (KIINSVILAGLYYGFLTALAL), 70–90 (LILGQLGQFLSIYYAPLYIAF), 93–113 (PYTLTVLTLIYFLVNLFGNNL), 130–150 (LEILCIFLNNLILQLLNTCIF), 170–190 (MVFLISSFSAWLIGQILVLMC), and 218–238 (FFLVVNCLFGSSLFILTIQSL). Composition is skewed to basic and acidic residues over residues 264-276 (LKKSGVAKEGKST) and 283-298 (SHEKDSFKKEPYSKLE). Disordered stretches follow at residues 264–302 (LKKSGVAKEGKSTEDEEDLSHEKDSFKKEPYSKLENEDE), 546–610 (LVVF…SYSI), 1123–1151 (NKQSLQKGNSKGNSNLDDSKNRNKNNLIL), and 1372–1436 (QQQN…SEDD). Over residues 562 to 586 (DSGNIQNKSSDKTINPQNNLTNSKT) the composition is skewed to polar residues. Positions 597–610 (TTEKEPKDDKSYSI) are enriched in basic and acidic residues. The span at 1123 to 1138 (NKQSLQKGNSKGNSNL) shows a compositional bias: polar residues. Residues 1372-1390 (QQQNQTTTKINTETKNQQK) show a composition bias toward low complexity. A coiled-coil region spans residues 1384–1436 (ETKNQQKNRVENEENKETENQQNAETKNKQKSKTENEENKETENQQNDESEDD). 2 stretches are compositionally biased toward basic and acidic residues: residues 1391–1402 (NRVENEENKETE) and 1409–1426 (TKNKQKSKTENEENKETE).

It belongs to the TIC214 family. Part of the Tic complex.

The protein resides in the plastid. It is found in the chloroplast inner membrane. Its function is as follows. Involved in protein precursor import into chloroplasts. May be part of an intermediate translocation complex acting as a protein-conducting channel at the inner envelope. This Cuscuta obtusiflora (Peruvian dodder) protein is Protein TIC 214.